The following is a 197-amino-acid chain: Lipid A acyltransferase PagP (197 aa).

Residues 1 to 24 form the signal peptide; that stretch reads MMFFKRTILACTVALLFPALPSYA. Catalysis depends on residues histidine 69, aspartate 112, and serine 113.

Belongs to the lipid A palmitoyltransferase family. Homodimer.

It is found in the cell outer membrane. It catalyses the reaction a lipid A + a 1,2-diacyl-sn-glycero-3-phosphocholine = a hepta-acyl lipid A + a 2-acyl-sn-glycero-3-phosphocholine. The enzyme catalyses a lipid IVA + a 1,2-diacyl-sn-glycero-3-phosphocholine = a lipid IVB + a 2-acyl-sn-glycero-3-phosphocholine. The catalysed reaction is a lipid IIA + a 1,2-diacyl-sn-glycero-3-phosphocholine = a lipid IIB + a 2-acyl-sn-glycero-3-phosphocholine. Transfers a fatty acid residue from the sn-1 position of a phospholipid to the N-linked hydroxyfatty acid chain on the proximal unit of lipid A or its precursors. This Serratia proteamaculans (strain 568) protein is Lipid A acyltransferase PagP.